A 453-amino-acid polypeptide reads, in one-letter code: Glutamyl-tRNA(Gln) amidotransferase subunit A (453 aa).

Catalysis depends on charge relay system residues lysine 53 and serine 128. The active-site Acyl-ester intermediate is serine 152.

Belongs to the amidase family. GatA subfamily. In terms of assembly, heterotrimer of A, B and C subunits.

The enzyme catalyses L-glutamyl-tRNA(Gln) + L-glutamine + ATP + H2O = L-glutaminyl-tRNA(Gln) + L-glutamate + ADP + phosphate + H(+). Functionally, allows the formation of correctly charged Gln-tRNA(Gln) through the transamidation of misacylated Glu-tRNA(Gln) in organisms which lack glutaminyl-tRNA synthetase. The reaction takes place in the presence of glutamine and ATP through an activated gamma-phospho-Glu-tRNA(Gln). This is Glutamyl-tRNA(Gln) amidotransferase subunit A from Helicobacter pylori (strain P12).